Consider the following 112-residue polypeptide: ATP synthase subunit c (112 aa).

2 consecutive transmembrane segments (helical) span residues 36–56 and 81–101; these read FSVL…AIGM and MFIA…IALI.

This sequence belongs to the ATPase C chain family. In terms of assembly, F-type ATPases have 2 components, F(1) - the catalytic core - and F(0) - the membrane proton channel. F(1) has five subunits: alpha(3), beta(3), gamma(1), delta(1), epsilon(1). F(0) has three main subunits: a(1), b(2) and c(10-14). The alpha and beta chains form an alternating ring which encloses part of the gamma chain. F(1) is attached to F(0) by a central stalk formed by the gamma and epsilon chains, while a peripheral stalk is formed by the delta and b chains.

The protein localises to the cell inner membrane. In terms of biological role, f(1)F(0) ATP synthase produces ATP from ADP in the presence of a proton or sodium gradient. F-type ATPases consist of two structural domains, F(1) containing the extramembraneous catalytic core and F(0) containing the membrane proton channel, linked together by a central stalk and a peripheral stalk. During catalysis, ATP synthesis in the catalytic domain of F(1) is coupled via a rotary mechanism of the central stalk subunits to proton translocation. This Campylobacter jejuni subsp. jejuni serotype O:2 (strain ATCC 700819 / NCTC 11168) protein is ATP synthase subunit c.